The chain runs to 306 residues: Latrophilin receptor-like protein A (306 aa).

Over 1 to 15 the chain is Extracellular; the sequence is MPSQLLNTVLSYLTD. Residues 16-36 traverse the membrane as a helical segment; the sequence is ILLSLSIVGSFLTIFTFMLYP. Residues 37-41 are Cytoplasmic-facing; sequence KLRSY. A helical transmembrane segment spans residues 42 to 62; that stretch reads PIKLIIYLCMSIVFSLFFFEI. The Extracellular segment spans residues 63–70; sequence SFRSSNSL. Residues 71-91 traverse the membrane as a helical segment; that stretch reads FCIPAAILVHYFFLANFFWTF. Residues 92 to 113 are Cytoplasmic-facing; that stretch reads SVSFNFFQMIVKRNRDSEFYER. The helical transmembrane segment at 114 to 134 threads the bilayer; it reads YYHLISWGIPFIIIIFCAAFK. At 135–152 the chain is on the extracellular side; it reads KYVDRGGFCYLEDQYSVY. A helical membrane pass occupies residues 153–173; sequence FGFFMPGVIIVCSNICIYVFV. Topologically, residues 174-196 are cytoplasmic; it reads AKEIYKTLRHTPTQKRQTVKEFR. A helical transmembrane segment spans residues 197 to 217; sequence VYFSIFVSIGSSWIFGFIYMF. Over 218-222 the chain is Extracellular; sequence SDSNS. A helical transmembrane segment spans residues 223 to 243; sequence IIGYIFLILFSISTSLQGFFI. Over 244 to 306 the chain is Cytoplasmic; sequence FISYCLNYKV…TTTTTNVYSA (63 aa). Positions 279 to 306 are disordered; sequence TTQSGPTGTTDSSSTMTSTTTTTNVYSA.

This sequence belongs to the G-protein coupled receptor 2 family. LN-TM7 subfamily.

Its subcellular location is the membrane. This Dictyostelium discoideum (Social amoeba) protein is Latrophilin receptor-like protein A (lrlA).